Reading from the N-terminus, the 379-residue chain is Arginine biosynthesis bifunctional protein ArgJ (379 aa).

Positions 140, 160, 171, 249, 374, and 379 each coordinate substrate. Threonine 171 (nucleophile) is an active-site residue.

It belongs to the ArgJ family. As to quaternary structure, heterotetramer of two alpha and two beta chains.

It is found in the cytoplasm. It carries out the reaction N(2)-acetyl-L-ornithine + L-glutamate = N-acetyl-L-glutamate + L-ornithine. The enzyme catalyses L-glutamate + acetyl-CoA = N-acetyl-L-glutamate + CoA + H(+). It functions in the pathway amino-acid biosynthesis; L-arginine biosynthesis; L-ornithine and N-acetyl-L-glutamate from L-glutamate and N(2)-acetyl-L-ornithine (cyclic): step 1/1. It participates in amino-acid biosynthesis; L-arginine biosynthesis; N(2)-acetyl-L-ornithine from L-glutamate: step 1/4. Catalyzes two activities which are involved in the cyclic version of arginine biosynthesis: the synthesis of N-acetylglutamate from glutamate and acetyl-CoA as the acetyl donor, and of ornithine by transacetylation between N(2)-acetylornithine and glutamate. In Archaeoglobus fulgidus (strain ATCC 49558 / DSM 4304 / JCM 9628 / NBRC 100126 / VC-16), this protein is Arginine biosynthesis bifunctional protein ArgJ.